A 485-amino-acid chain; its full sequence is ATP synthase subunit beta (485 aa).

A disordered region spans residues 1-20 (MSTTKTTKMTVKTGSKGTSG). 170–177 (GGAGVGKT) lines the ATP pocket.

Belongs to the ATPase alpha/beta chains family. In terms of assembly, F-type ATPases have 2 components, CF(1) - the catalytic core - and CF(0) - the membrane proton channel. CF(1) has five subunits: alpha(3), beta(3), gamma(1), delta(1), epsilon(1). CF(0) has three main subunits: a(1), b(2) and c(9-12). The alpha and beta chains form an alternating ring which encloses part of the gamma chain. CF(1) is attached to CF(0) by a central stalk formed by the gamma and epsilon chains, while a peripheral stalk is formed by the delta and b chains.

The protein localises to the cell membrane. The enzyme catalyses ATP + H2O + 4 H(+)(in) = ADP + phosphate + 5 H(+)(out). Its function is as follows. Produces ATP from ADP in the presence of a proton gradient across the membrane. The catalytic sites are hosted primarily by the beta subunits. This is ATP synthase subunit beta from Mycobacterium leprae (strain TN).